We begin with the raw amino-acid sequence, 383 residues long: tRNA (adenine(58)-N(1))-methyltransferase catalytic subunit TRM61 (383 aa).

S-adenosyl-L-methionine is bound by residues Val-94, Ser-121–Phe-124, Glu-139, Arg-144, Asp-168–Val-169, and Asp-203. Ser-302 bears the Phosphoserine mark.

This sequence belongs to the class I-like SAM-binding methyltransferase superfamily. TRM61 family. As to quaternary structure, heterotetramer; composed of two copies of TRM6/GCD10 and two copies of TRM61/GCD14.

The protein localises to the nucleus. The enzyme catalyses adenosine(58) in tRNA + S-adenosyl-L-methionine = N(1)-methyladenosine(58) in tRNA + S-adenosyl-L-homocysteine + H(+). In terms of biological role, catalytic subunit of tRNA (adenine-N(1)-)-methyltransferase, which catalyzes the formation of N(1)-methyladenine at position 58 (m1A58) in initiator methionyl-tRNA. GCD14 is also required for repression of GCN4 mRNA translation by the upstream open reading frames (uORFs) under conditions of amino acid sufficiency. The chain is tRNA (adenine(58)-N(1))-methyltransferase catalytic subunit TRM61 (GCD14) from Saccharomyces cerevisiae (strain ATCC 204508 / S288c) (Baker's yeast).